We begin with the raw amino-acid sequence, 401 residues long: 1-deoxy-D-xylulose 5-phosphate reductoisomerase (401 aa).

NADPH is bound by residues Thr-11, Gly-12, Ser-13, Ile-14, Arg-38, Asn-39, and Asn-125. Lys-126 lines the 1-deoxy-D-xylulose 5-phosphate pocket. Position 127 (Glu-127) interacts with NADPH. Mn(2+) is bound at residue Asp-151. Ser-152, Glu-153, Ser-179, and His-202 together coordinate 1-deoxy-D-xylulose 5-phosphate. Position 153 (Glu-153) interacts with Mn(2+). Gly-208 is a binding site for NADPH. 1-deoxy-D-xylulose 5-phosphate contacts are provided by Ser-215, Asn-220, Lys-221, and Glu-224. A Mn(2+)-binding site is contributed by Glu-224.

It belongs to the DXR family. Mg(2+) is required as a cofactor. Requires Mn(2+) as cofactor.

The enzyme catalyses 2-C-methyl-D-erythritol 4-phosphate + NADP(+) = 1-deoxy-D-xylulose 5-phosphate + NADPH + H(+). It functions in the pathway isoprenoid biosynthesis; isopentenyl diphosphate biosynthesis via DXP pathway; isopentenyl diphosphate from 1-deoxy-D-xylulose 5-phosphate: step 1/6. Functionally, catalyzes the NADPH-dependent rearrangement and reduction of 1-deoxy-D-xylulose-5-phosphate (DXP) to 2-C-methyl-D-erythritol 4-phosphate (MEP). The sequence is that of 1-deoxy-D-xylulose 5-phosphate reductoisomerase from Paraburkholderia xenovorans (strain LB400).